Consider the following 250-residue polypeptide: Triosephosphate isomerase (250 aa).

10-12 (NWK) is a binding site for substrate. Histidine 96 acts as the Electrophile in catalysis. The active-site Proton acceptor is glutamate 168. Substrate-binding positions include glycine 174, serine 214, and 235–236 (GG).

The protein belongs to the triosephosphate isomerase family. As to quaternary structure, homodimer.

It localises to the cytoplasm. It catalyses the reaction D-glyceraldehyde 3-phosphate = dihydroxyacetone phosphate. The protein operates within carbohydrate biosynthesis; gluconeogenesis. It functions in the pathway carbohydrate degradation; glycolysis; D-glyceraldehyde 3-phosphate from glycerone phosphate: step 1/1. In terms of biological role, involved in the gluconeogenesis. Catalyzes stereospecifically the conversion of dihydroxyacetone phosphate (DHAP) to D-glyceraldehyde-3-phosphate (G3P). The protein is Triosephosphate isomerase of Streptococcus suis (strain 98HAH33).